The primary structure comprises 212 residues: Large ribosomal subunit protein uL3 (212 aa).

The disordered stretch occupies residues 127–161 (NFKRGPMAHGSKNHRLPGSTGAGTTPGRVFPGKRM).

Belongs to the universal ribosomal protein uL3 family. As to quaternary structure, part of the 50S ribosomal subunit. Forms a cluster with proteins L14 and L19.

In terms of biological role, one of the primary rRNA binding proteins, it binds directly near the 3'-end of the 23S rRNA, where it nucleates assembly of the 50S subunit. In Thermosynechococcus vestitus (strain NIES-2133 / IAM M-273 / BP-1), this protein is Large ribosomal subunit protein uL3.